We begin with the raw amino-acid sequence, 387 residues long: Migration and invasion-inhibitory protein (387 aa).

Positions 50-59 are enriched in polar residues; the sequence is NLEMPLSQET. Disordered regions lie at residues 50–80 and 133–172; these read NLEM…DPLD and VSLG…SAVP. The span at 60–69 shows a compositional bias: low complexity; that stretch reads SSASSVAPSS. A compositionally biased stretch (basic and acidic residues) spans 70-80; sequence QDKRHMLDPLD. A Phosphoserine modification is found at Ser-307.

As to quaternary structure, interacts with IGFBP2.

Inhibits glioma cells invasion and down-regulates adhesion- and motility-associated genes such as NFKB2 and ICAM1. Exhibits opposing effects to IGFBP2 on cell invasion. In Mus musculus (Mouse), this protein is Migration and invasion-inhibitory protein (Miip).